The primary structure comprises 117 residues: Large ribosomal subunit protein uL22 (117 aa).

Belongs to the universal ribosomal protein uL22 family. In terms of assembly, part of the 50S ribosomal subunit.

Functionally, this protein binds specifically to 23S rRNA; its binding is stimulated by other ribosomal proteins, e.g. L4, L17, and L20. It is important during the early stages of 50S assembly. It makes multiple contacts with different domains of the 23S rRNA in the assembled 50S subunit and ribosome. Its function is as follows. The globular domain of the protein is located near the polypeptide exit tunnel on the outside of the subunit, while an extended beta-hairpin is found that lines the wall of the exit tunnel in the center of the 70S ribosome. In Latilactobacillus sakei subsp. sakei (strain 23K) (Lactobacillus sakei subsp. sakei), this protein is Large ribosomal subunit protein uL22.